A 1178-amino-acid polypeptide reads, in one-letter code: Thrombospondin-2 (1178 aa).

The first 22 residues, 1 to 22 (MLQRSRLLWLAVFITLWVSSDA), serve as a signal peptide directing secretion. Residues 25 to 221 (DAKEEENTFD…LQNIHLIFDT (197 aa)) form the Laminin G-like domain. N157, N244, N317, and N322 each carry an N-linked (GlcNAc...) asparagine glycan. The 58-residue stretch at 324-381 (SVCWQDGRVFADSESWIVDSCTKCTCQDSKIVCHQITCPPVSCADPSFIEGECCPVCS) folds into the VWFC domain. TSP type-1 domains follow at residues 387–437 (EEGW…KKCD), 443–498 (DGGW…APCP), and 500–555 (NGQW…RDCP). 27 disulfides stabilise this stretch: C399-C431, C403-C436, C414-C421, C455-C492, C459-C497, C470-C482, C512-C549, C516-C554, C527-C539, C559-C570, C564-C580, C583-C594, C600-C616, C607-C625, C628-C652, C658-C671, C665-C684, C686-C697, C713-C721, C726-C746, C762-C782, C785-C805, C821-C841, C844-C864, C882-C902, C918-C938, and C954-C1175. The N-linked (GlcNAc...) asparagine glycan is linked to N463. The EGF-like 1 domain maps to 555–595 (PIDGCLSNPCFPGAECNSYPDGSWSCGPCPAGFLGNGTVCE). N590 carries N-linked (GlcNAc...) asparagine glycosylation. An EGF-like 2 domain is found at 654-698 (PENPCKDKTHSCHKSAECIYLGHFSDPMYKCECRTGYAGDGRICG). TSP type-3 repeat units follow at residues 699-734 (EDSDLDGWPNNNLVCAANATYHCVKDNCPLLPNSGQ), 735-770 (EDFDKDGKGDACDEDDDNDGVEDDKDNCPLLFNPRQ), 771-793 (FDYDKDEVGDRCDNCPYVHNPAQ), 794-829 (IDTDNNGEGDSCAVDIDGDDIFNERDNCPYVYNTDQ), 830-852 (SDTDGDGVGDQCDNCPLMHNPDQ), 853-890 (TDADNDLVGDQCDNNEDIDEDGHQNNQDNCPYIPNANQ), 891-926 (ADHDKDGKGDACDPDDDNDGIPDDRDNCRLRYNPEQ), and 927-962 (EDSDGDGRGDICKDDFDDDNVPDIFDVCPENNAISE). N716 is a glycosylation site (N-linked (GlcNAc...) asparagine). A disordered region spans residues 737–760 (FDKDGKGDACDEDDDNDGVEDDKD). Residues 746 to 759 (CDEDDDNDGVEDDK) are compositionally biased toward acidic residues. The disordered stretch occupies residues 852-941 (QTDADNDLVG…DGRGDICKDD (90 aa)). Acidic residues predominate over residues 853-872 (TDADNDLVGDQCDNNEDIDE). Basic and acidic residues predominate over residues 891–901 (ADHDKDGKGDA). Residues 902 to 911 (CDPDDDNDGI) are compositionally biased toward acidic residues. 2 stretches are compositionally biased toward basic and acidic residues: residues 912-924 (PDDRDNCRLRYNP) and 931-940 (GDGRGDICKD). The Cell attachment site signature appears at 934-936 (RGD). In terms of domain architecture, TSP C-terminal spans 966–1178 (RKFQMVPLDP…SDLKYECRDA (213 aa)). Residue N1075 is glycosylated (N-linked (GlcNAc...) asparagine).

Belongs to the thrombospondin family. As to quaternary structure, homotrimer; disulfide-linked. Can bind to fibrinogen, fibronectin, laminin and type V collagen.

Adhesive glycoprotein that mediates cell-to-cell and cell-to-matrix interactions. The sequence is that of Thrombospondin-2 (THBS2) from Gallus gallus (Chicken).